Here is a 235-residue protein sequence, read N- to C-terminus: 1-(5-phosphoribosyl)-5-[(5-phosphoribosylamino)methylideneamino] imidazole-4-carboxamide isomerase (235 aa).

The Proton acceptor role is filled by aspartate 8. The Proton donor role is filled by aspartate 129.

Belongs to the HisA/HisF family.

It localises to the cytoplasm. The enzyme catalyses 1-(5-phospho-beta-D-ribosyl)-5-[(5-phospho-beta-D-ribosylamino)methylideneamino]imidazole-4-carboxamide = 5-[(5-phospho-1-deoxy-D-ribulos-1-ylimino)methylamino]-1-(5-phospho-beta-D-ribosyl)imidazole-4-carboxamide. It functions in the pathway amino-acid biosynthesis; L-histidine biosynthesis; L-histidine from 5-phospho-alpha-D-ribose 1-diphosphate: step 4/9. The chain is 1-(5-phosphoribosyl)-5-[(5-phosphoribosylamino)methylideneamino] imidazole-4-carboxamide isomerase from Thermoanaerobacter sp. (strain X514).